Reading from the N-terminus, the 277-residue chain is Caspase-3 (277 aa).

Methionine 1 is subject to N-acetylmethionine. 2 propeptides span residues 1–9 and 10–28; these read MENTENSVD and SKSI…KSVD. The residue at position 11 (lysine 11) is an N6-acetyllysine. Serine 26 bears the Phosphoserine mark. Catalysis depends on residues histidine 121 and cysteine 163. The residue at position 163 (cysteine 163) is an S-nitrosocysteine; in inhibited form.

It belongs to the peptidase C14A family. As to quaternary structure, heterotetramer that consists of two anti-parallel arranged heterodimers, each one formed by a 17 kDa (p17) and a 12 kDa (p12) subunit. Interacts with BIRC6/bruce. In terms of processing, cleavage by granzyme B, caspase-6, caspase-8 and caspase-10 generates the two active subunits. Additional processing of the propeptides is likely due to the autocatalytic activity of the activated protease. Active heterodimers between the small subunit of caspase-7 protease and the large subunit of caspase-3 also occur and vice versa. Post-translationally, S-nitrosylated on its catalytic site cysteine in unstimulated cell lines and denitrosylated upon activation of the Fas apoptotic pathway, associated with an increase in intracellular caspase activity. Fas therefore activates caspase-3 not only by inducing the cleavage of the caspase zymogen to its active subunits, but also by stimulating the denitrosylation of its active site thiol. Ubiquitinated by BIRC6; this activity is inhibited by DIABLO/SMAC.

It is found in the cytoplasm. The enzyme catalyses Strict requirement for an Asp residue at positions P1 and P4. It has a preferred cleavage sequence of Asp-Xaa-Xaa-Asp-|- with a hydrophobic amino-acid residue at P2 and a hydrophilic amino-acid residue at P3, although Val or Ala are also accepted at this position.. Its activity is regulated as follows. Inhibited by BIRC6; following inhibition of BIRC6-caspase binding by DIABLO/SMAC, BIRC6 is subjected to caspase cleavage, leading to an increase in active caspases. Functionally, involved in the activation cascade of caspases responsible for apoptosis execution. At the onset of apoptosis, it proteolytically cleaves poly(ADP-ribose) polymerase PARP1 at a '216-Asp-|-Gly-217' bond. Cleaves and activates sterol regulatory element binding proteins (SREBPs) between the basic helix-loop-helix leucine zipper domain and the membrane attachment domain. Cleaves and activates caspase-6, -7 and -9 (CASP6, CASP7 and CASP9, respectively). Cleaves and inactivates interleukin-18 (IL18). Triggers cell adhesion in sympathetic neurons through RET cleavage. Cleaves IL-1 beta between an Asp and an Ala, releasing the mature cytokine which is involved in a variety of inflammatory processes. Cleaves and inhibits serine/threonine-protein kinase AKT1 in response to oxidative stress. Acts as an inhibitor of type I interferon production during virus-induced apoptosis by mediating cleavage of antiviral proteins CGAS, IRF3 and MAVS, thereby preventing cytokine overproduction. Also involved in pyroptosis by mediating cleavage and activation of gasdermin-E (GSDME). Cleaves XRCC4 and phospholipid scramblase proteins XKR4, XKR8 and XKR9, leading to promote phosphatidylserine exposure on apoptotic cell surface. Cleaves BIRC6 following inhibition of BIRC6-caspase binding by DIABLO/SMAC. This is Caspase-3 (CASP3) from Macaca fascicularis (Crab-eating macaque).